A 99-amino-acid polypeptide reads, in one-letter code: Ferredoxin, vegetative (99 aa).

The 2Fe-2S ferredoxin-type domain maps to 4–96 (YQVRLINKKR…DCTIRTHQEP (93 aa)). [2Fe-2S] cluster-binding residues include cysteine 42, cysteine 47, cysteine 50, and cysteine 80.

Belongs to the 2Fe2S plant-type ferredoxin family. The cofactor is [2Fe-2S] cluster.

Its function is as follows. Ferredoxins are iron-sulfur proteins that transfer electrons in a wide variety of metabolic reactions. Donates electrons to the nitrogenase 2. In Trichormus variabilis (strain ATCC 29413 / PCC 7937) (Anabaena variabilis), this protein is Ferredoxin, vegetative (fdxH2).